Reading from the N-terminus, the 508-residue chain is MLWFQGAIPAAIASAKRSGAVFVVFVAGDDEQSTQMAASWEDEKVTEASSNSFVAIKIDTRSEACLQFSQIYPVVCVPSSFFIGDSGIPLEVIAGSISADELVTRIHKVRQMHSLKGEASLANGSQSEGSVSTPSASFEHNNTSENCQSRNVELCETPSTSDTKSDSATGGESSGQTTVSQEPSGCSNQRPTEDLTVRVERLTKKLEERREEKRKEEEQREIKKEIERRKTGKEMLDYKRKQEEELTKRMLEERNREKAEDRAARERIKQQIALDRAERAARFAKTKEEVEAAKAAALLAKQAEMEIKRETSTKERSTVARIQFRLPDGSSFTNQFPSDAPLEEARQFAAQTVGNTYGNFSLATMFPRREFTKEDYKKKLLDLELAPSASVVLLPAGRPTTSMVHSSSGDFWTLLGTVLYPFLAIWRLISNFLFSNPPPAQTSVRAASLETSNLASSSNSEKREPVRKRVLEKRGEDFKKEGKIYRLRTQDDGEDENNTWNGNSTQQM.

Positions 1-200 (MLWFQGAIPA…PTEDLTVRVE (200 aa)) are interaction with UBQLN1. Residues 1–413 (MLWFQGAIPA…VHSSSGDFWT (413 aa)) are Cytoplasmic-facing. The tract at residues 117-199 (GEASLANGSQ…RPTEDLTVRV (83 aa)) is disordered. Over residues 122-190 (ANGSQSEGSV…QEPSGCSNQR (69 aa)) the composition is skewed to polar residues. Positions 315-393 (ERSTVARIQF…ELAPSASVVL (79 aa)) constitute a UBX domain. The stretch at 414-434 (LLGTVLYPFLAIWRLISNFLF) is an intramembrane region. Residues 435-508 (SNPPPAQTSV…TWNGNSTQQM (74 aa)) lie on the Cytoplasmic side of the membrane. The segment covering 450–459 (ETSNLASSSN) has biased composition (polar residues). Residues 450-508 (ETSNLASSSNSEKREPVRKRVLEKRGEDFKKEGKIYRLRTQDDGEDENNTWNGNSTQQM) form a disordered region. The segment covering 460-491 (SEKREPVRKRVLEKRGEDFKKEGKIYRLRTQD) has biased composition (basic and acidic residues). Thr489 is subject to Phosphothreonine. The span at 498–508 (NTWNGNSTQQM) shows a compositional bias: polar residues.

In terms of assembly, directly interacts with VCP. Interacts with UBQLN1. Forms a complex with VCP and UBQLN1.

It localises to the endoplasmic reticulum membrane. It is found in the nucleus envelope. Functionally, involved in endoplasmic reticulum-associated protein degradation (ERAD). Acts as a platform to recruit both UBQLN1 and VCP to the ER during ERAD. This is UBX domain-containing protein 4 (UBXN4) from Bos taurus (Bovine).